The sequence spans 89 residues: Small ribosomal subunit protein uS15 (89 aa).

Belongs to the universal ribosomal protein uS15 family. In terms of assembly, part of the 30S ribosomal subunit. Forms a bridge to the 50S subunit in the 70S ribosome, contacting the 23S rRNA.

In terms of biological role, one of the primary rRNA binding proteins, it binds directly to 16S rRNA where it helps nucleate assembly of the platform of the 30S subunit by binding and bridging several RNA helices of the 16S rRNA. Forms an intersubunit bridge (bridge B4) with the 23S rRNA of the 50S subunit in the ribosome. The polypeptide is Small ribosomal subunit protein uS15 (Oleidesulfovibrio alaskensis (strain ATCC BAA-1058 / DSM 17464 / G20) (Desulfovibrio alaskensis)).